The following is a 753-amino-acid chain: Rsm22-cox11 tandem protein 2, mitochondrial (753 aa).

A mitochondrion-targeting transit peptide spans Met-1–Trp-39. Positions 323, 329, 342, and 430 each coordinate [4Fe-4S] cluster. A helical transmembrane segment spans residues Ile-571–Leu-591. At Tyr-592–Asn-753 the chain is on the mitochondrial intermembrane side.

In the N-terminal section; belongs to the methyltransferase superfamily. Rsm22 family. It in the C-terminal section; belongs to the COX11/CtaG family. As to quaternary structure, associates with the mitochondrial ribosome (mitoribosome). Only transiently interacts with the mitoribosome. In terms of processing, specific enzymatic cleavages in vivo by mitochondrial processing peptidase (MPP) yield mature proteins including rsm22-2 and cox11-2.

It localises to the mitochondrion. It is found in the mitochondrion inner membrane. Its function is as follows. Mitochondrial ribosome (mitoribosome) assembly factor. Binds at the interface of the head and body domains of the mitochondrial small ribosomal subunit (mt-SSU), occluding the mRNA channel and preventing compaction of the head domain towards the body. Probable inactive methyltransferase: retains the characteristic folding and ability to bind S-adenosyl-L-methionine, but it probably lost its methyltransferase activity. Functionally, exerts its effect at some terminal stage of cytochrome c oxidase synthesis, probably by being involved in the insertion of the copper B into subunit I. The protein is Rsm22-cox11 tandem protein 2, mitochondrial (cox1102) of Schizosaccharomyces pombe (strain 972 / ATCC 24843) (Fission yeast).